We begin with the raw amino-acid sequence, 473 residues long: Probable dipeptidase (473 aa).

C10 is an active-site residue.

This sequence belongs to the peptidase C69 family.

The catalysed reaction is an L-aminoacyl-L-amino acid + H2O = 2 an L-alpha-amino acid. This chain is Probable dipeptidase, found in Latilactobacillus sakei (Lactobacillus sakei).